We begin with the raw amino-acid sequence, 118 residues long: Large ribosomal subunit protein bL20 (118 aa).

This sequence belongs to the bacterial ribosomal protein bL20 family.

In terms of biological role, binds directly to 23S ribosomal RNA and is necessary for the in vitro assembly process of the 50S ribosomal subunit. It is not involved in the protein synthesizing functions of that subunit. The polypeptide is Large ribosomal subunit protein bL20 (Elusimicrobium minutum (strain Pei191)).